The sequence spans 130 residues: Small ribosomal subunit protein uS11 (130 aa).

This sequence belongs to the universal ribosomal protein uS11 family. Part of the 30S ribosomal subunit. Interacts with proteins S7 and S18. Binds to IF-3.

Its function is as follows. Located on the platform of the 30S subunit, it bridges several disparate RNA helices of the 16S rRNA. Forms part of the Shine-Dalgarno cleft in the 70S ribosome. The polypeptide is Small ribosomal subunit protein uS11 (Prochlorococcus marinus subsp. pastoris (strain CCMP1986 / NIES-2087 / MED4)).